The primary structure comprises 1336 residues: Vascular endothelial growth factor receptor 1 (1336 aa).

The signal sequence occupies residues 1–22 (MVSCWDTAVLPCALLGCLLLTG). The Extracellular segment spans residues 23-758 (YCSGSKLKGP…QGTSDKSNLE (736 aa)). Ig-like C2-type domains lie at 32 to 121 (PELS…KKME), 151 to 214 (GREL…VNGH), 230 to 327 (LDVQ…TSVH), 335 to 421 (SVKH…LTAT), 429 to 549 (QIYE…RDIR), 556 to 655 (PNGF…EVLV), and 661 to 747 (PLLL…AYLT). Intrachain disulfides connect cysteine 53–cysteine 107 and cysteine 158–cysteine 207. Asparagine 100, asparagine 164, asparagine 196, and asparagine 251 each carry an N-linked (GlcNAc...) asparagine glycan. Cysteine 252 and cysteine 311 are disulfide-bonded. Residues asparagine 323, asparagine 417, asparagine 474, asparagine 516, asparagine 597, asparagine 625, asparagine 666, and asparagine 713 are each glycosylated (N-linked (GlcNAc...) asparagine). Intrachain disulfides connect cysteine 454/cysteine 535 and cysteine 577/cysteine 636. The cysteines at positions 682 and 731 are disulfide-linked. A helical transmembrane segment spans residues 759–780 (LITLTCTCVAATLFWLLLTLFI). Topologically, residues 781–1336 (RKLKRSSSEV…SVVLYSSPPA (556 aa)) are cytoplasmic. A Protein kinase domain is found at 827 to 1158 (LKLGKSLGRG…ELVEKLGDLL (332 aa)). Residues 833 to 841 (LGRGAFGKV) and lysine 861 contribute to the ATP site. Phosphotyrosine; by autocatalysis is present on tyrosine 914. Over residues 941 to 957 (KKEKLEPDLEQDQKPRL) the composition is skewed to basic and acidic residues. Residues 941 to 982 (KKEKLEPDLEQDQKPRLDSVSSSESFTSSGFQEDKSVSDVEG) are disordered. Positions 959–969 (SVSSSESFTSS) are enriched in low complexity. Aspartate 1022 serves as the catalytic Proton acceptor. A phosphotyrosine; by autocatalysis mark is found at tyrosine 1053, tyrosine 1169, tyrosine 1213, tyrosine 1242, tyrosine 1325, and tyrosine 1331. A disordered region spans residues 1304–1326 (RQEDEDDPELGKESCCSPPPDYN).

The protein belongs to the protein kinase superfamily. Tyr protein kinase family. CSF-1/PDGF receptor subfamily. Interacts with VEGFA, VEGFB and PGF. Monomer in the absence of bound VEGFA, VEGFB or PGF. Homodimer in the presence of bound VEGFA, VEGFB and PGF. Can also form a heterodimer with KDR. Interacts (tyrosine phosphorylated) with CBL, CRK, GRB2, NCK1, PIK3R1, PLCG, PSEN1 and PTPN11. Probably interacts with PTPRB. Interacts with RACK1. Identified in a complex with CBL and CD2AP. In terms of processing, N-glycosylated. Post-translationally, ubiquitinated after VEGFA-mediated autophosphorylation, leading to proteolytic degradation. Autophosphorylated on tyrosine residues upon ligand binding. Autophosphorylation occurs in trans, i.e. one subunit of the dimeric receptor phosphorylates tyrosine residues on the other subunit. Phosphorylation at Tyr-1169 is important for interaction with PLCG. Phosphorylation at Tyr-1213 is important for interaction with PIK3R1, PTPN11, GRB2, and PLCG. Phosphorylation at Tyr-1331 is important for endocytosis and for interaction with CBL, NCK1 and CRK. Is probably dephosphorylated by PTPRB.

It localises to the cell membrane. Its subcellular location is the endosome. It catalyses the reaction L-tyrosyl-[protein] + ATP = O-phospho-L-tyrosyl-[protein] + ADP + H(+). With respect to regulation, present in an inactive conformation in the absence of bound ligand. Binding of VEGFA, VEGFB or PGF leads to dimerization and activation by autophosphorylation on tyrosine residues. Its function is as follows. Tyrosine-protein kinase that acts as a cell-surface receptor for VEGFA, VEGFB and PGF, and plays an essential role in the development of embryonic vasculature, the regulation of angiogenesis, cell survival, cell migration, macrophage function, chemotaxis, and cancer cell invasion. Acts as a positive regulator of postnatal retinal hyaloid vessel regression. May play an essential role as a negative regulator of embryonic angiogenesis by inhibiting excessive proliferation of endothelial cells. Can promote endothelial cell proliferation, survival and angiogenesis in adulthood. Its function in promoting cell proliferation seems to be cell-type specific. Promotes PGF-mediated proliferation of endothelial cells, and proliferation of some types of cancer cells, but does not promote proliferation of normal fibroblasts. Has very high affinity for VEGFA and relatively low protein kinase activity; may function as a negative regulator of VEGFA signaling by limiting the amount of free VEGFA and preventing its binding to KDR. Modulates KDR signaling by forming heterodimers with KDR. Ligand binding leads to the activation of several signaling cascades. Activation of PLCG leads to the production of the cellular signaling molecules diacylglycerol and inositol 1,4,5-trisphosphate and the activation of protein kinase C. Mediates phosphorylation of PIK3R1, the regulatory subunit of phosphatidylinositol 3-kinase, leading to the activation of phosphatidylinositol kinase and the downstream signaling pathway. Mediates activation of MAPK1/ERK2, MAPK3/ERK1 and the MAP kinase signaling pathway, as well as of the AKT1 signaling pathway. Phosphorylates SRC, YES1 and PLCG, and may also phosphorylate CBL. Promotes phosphorylation of AKT1 and PTK2/FAK1. In Rattus norvegicus (Rat), this protein is Vascular endothelial growth factor receptor 1 (Flt1).